The following is a 130-amino-acid chain: Small ribosomal subunit protein uS9 (130 aa).

This sequence belongs to the universal ribosomal protein uS9 family.

The polypeptide is Small ribosomal subunit protein uS9 (Leptothrix cholodnii (strain ATCC 51168 / LMG 8142 / SP-6) (Leptothrix discophora (strain SP-6))).